Reading from the N-terminus, the 428-residue chain is Aspartate--tRNA(Asp) ligase (428 aa).

E170 is a binding site for L-aspartate. The segment at Q192 to K195 is aspartate. R213 is an L-aspartate binding site. Residues R213–E215 and E351 contribute to the ATP site. 2 residues coordinate Mg(2+): E351 and S354. L-aspartate contacts are provided by S354 and R358. Residue G399–R402 coordinates ATP.

The protein belongs to the class-II aminoacyl-tRNA synthetase family. Type 2 subfamily. As to quaternary structure, homodimer. The cofactor is Mg(2+).

Its subcellular location is the cytoplasm. It carries out the reaction tRNA(Asp) + L-aspartate + ATP = L-aspartyl-tRNA(Asp) + AMP + diphosphate. Functionally, catalyzes the attachment of L-aspartate to tRNA(Asp) in a two-step reaction: L-aspartate is first activated by ATP to form Asp-AMP and then transferred to the acceptor end of tRNA(Asp). In Pyrobaculum aerophilum (strain ATCC 51768 / DSM 7523 / JCM 9630 / CIP 104966 / NBRC 100827 / IM2), this protein is Aspartate--tRNA(Asp) ligase.